Reading from the N-terminus, the 468-residue chain is Aldehyde dehydrogenase family 3 member B1 (468 aa).

N-acetylmethionine is present on Met-1. Residue 188 to 193 participates in NAD(+) binding; it reads GNTYVG. Residues Glu-210 and Cys-244 contribute to the active site. 2 S-palmitoyl cysteine lipidation sites follow: Cys-462 and Cys-463. Cys-465 carries the post-translational modification Cysteine methyl ester. A lipid anchor (S-geranylgeranyl cysteine) is attached at Cys-465. Residues 466-468 constitute a propeptide, removed in mature form; that stretch reads TLL.

This sequence belongs to the aldehyde dehydrogenase family. Dually lipidated in the C-terminus; prenylation occurs prior to, and is a prerequisite for palmitoylation. It is also required for activity towards long-chain substrates.

It is found in the cell membrane. It catalyses the reaction an aldehyde + NAD(+) + H2O = a carboxylate + NADH + 2 H(+). The catalysed reaction is a long-chain fatty aldehyde + NAD(+) + H2O = a long-chain fatty acid + NADH + 2 H(+). The enzyme catalyses a medium-chain fatty aldehyde + NAD(+) + H2O = a medium-chain fatty acid + NADH + 2 H(+). It carries out the reaction octanal + NAD(+) + H2O = octanoate + NADH + 2 H(+). It catalyses the reaction nonanal + NAD(+) + H2O = nonanoate + NADH + 2 H(+). The catalysed reaction is hexadecanoate + NADH + 2 H(+) = hexadecanal + NAD(+) + H2O. The enzyme catalyses (2E)-octenal + NAD(+) + H2O = (2E)-octenoate + NADH + 2 H(+). It carries out the reaction (E)-non-2-enal + NAD(+) + H2O = (E)-non-2-enoate + NADH + 2 H(+). It catalyses the reaction (E)-4-hydroxynon-2-enal + NAD(+) + H2O = (E)-4-hydroxynon-2-enoate + NADH + 2 H(+). The catalysed reaction is (2E)-hexadecenal + NAD(+) + H2O = (E)-hexadec-2-enoate + NADH + 2 H(+). The enzyme catalyses benzaldehyde + NAD(+) + H2O = benzoate + NADH + 2 H(+). It carries out the reaction an aldehyde + NADP(+) + H2O = a carboxylate + NADPH + 2 H(+). It catalyses the reaction a medium-chain fatty aldehyde + NADP(+) + H2O = a medium-chain fatty acid + NADPH + 2 H(+). The catalysed reaction is hexanal + NADP(+) + H2O = hexanoate + NADPH + 2 H(+). The enzyme catalyses octanal + NADP(+) + H2O = octanoate + NADPH + 2 H(+). It carries out the reaction nonanal + NADP(+) + H2O = nonanoate + NADPH + 2 H(+). It catalyses the reaction (2E)-octenal + NADP(+) + H2O = (2E)-octenoate + NADPH + 2 H(+). The catalysed reaction is (E)-non-2-enal + NADP(+) + H2O = (E)-non-2-enoate + NADPH + 2 H(+). The enzyme catalyses (E)-4-hydroxynon-2-enal + NADP(+) + H2O = (E)-4-hydroxynon-2-enoate + NADPH + 2 H(+). It carries out the reaction benzaldehyde + NADP(+) + H2O = benzoate + NADPH + 2 H(+). It functions in the pathway alcohol metabolism; ethanol degradation; acetate from ethanol: step 2/2. Its function is as follows. Oxidizes medium and long chain saturated and unsaturated fatty aldehydes generated in the plasma membrane into non-toxic fatty acids. May have a protective role against the cytotoxicity induced by lipid peroxidation. Short-chain fatty aldehydes are not good substrates. Can use both NADP(+) and NAD(+) as electron acceptor in vitro, however in vivo preference will depend on their tissue levels. Low activity towards acetaldehyde and 3,4-dihydroxyphenylacetaldehyde. Able to metabolize aromatic aldehydes such as benzaldehyde to their acid form. This chain is Aldehyde dehydrogenase family 3 member B1 (Aldh3b1), found in Rattus norvegicus (Rat).